Reading from the N-terminus, the 195-residue chain is Dephospho-CoA kinase (195 aa).

One can recognise a DPCK domain in the interval 3 to 195 (IIGLTGSIAM…FSIIENLLKN (193 aa)). 11–16 (AMGKST) contacts ATP.

Belongs to the CoaE family.

The protein resides in the cytoplasm. The catalysed reaction is 3'-dephospho-CoA + ATP = ADP + CoA + H(+). The protein operates within cofactor biosynthesis; coenzyme A biosynthesis; CoA from (R)-pantothenate: step 5/5. Catalyzes the phosphorylation of the 3'-hydroxyl group of dephosphocoenzyme A to form coenzyme A. The protein is Dephospho-CoA kinase of Bartonella quintana (strain Toulouse) (Rochalimaea quintana).